The following is a 272-amino-acid chain: Plastid division protein PDV1 (272 aa).

Residues Met1–Lys206 lie on the Cytoplasmic side of the membrane. Residues Lys40 to Pro61 form a disordered region. Positions Ile78–His102 form a coiled coil. The helical transmembrane segment at Gly207–Leu225 threads the bilayer. Residues His226–Gly272 are Chloroplast intermembrane-facing.

As to quaternary structure, interacts (via C-terminus) with CDP1/PARC6 (via C-terminus). Interacts with ARC5/DRP5B. As to expression, expressed in young developing leaves, root tips, shoot apices, and flower buds (sepals, petals, stamens, and pistils), but not in developed tissues.

The protein localises to the plastid. It is found in the chloroplast outer membrane. Its function is as follows. Component of the plastid division machinery. Required to mediate the dissociation of ARC5/DRP5B from plastid outer envelope membranes (OEMs) at the midplastid constriction site in the cytoplasm, thus triggering ARC5/DRP5B ring turnover at the chloroplast division site. Binding to phosphatidylinositol 4-phosphate (PI4P) modulates negatively chloroplast division. The sequence is that of Plastid division protein PDV1 from Arabidopsis thaliana (Mouse-ear cress).